The following is a 523-amino-acid chain: Rho guanine nucleotide exchange factor 8 (523 aa).

The segment covering V44 to F57 has biased composition (polar residues). Disordered stretches follow at residues V44–Q83 and E442–H523. The PRONE domain occupies G76 to A440. Basic and acidic residues predominate over residues E465–T475.

Homodimer. The homodimer interacts with ARAC5/ROP4. Interacts with ARAC11/ROP1 and ARAC10/ROP11. Interacts with PRK6. Expressed in pollen grains and pollen tubes.

It localises to the cell membrane. Guanine-nucleotide exchange factor (GEF) that acts as an activator of Rop (Rho of plants) GTPases by promoting the exchange of GDP for GTP. Active as homodimer. The chain is Rho guanine nucleotide exchange factor 8 from Arabidopsis thaliana (Mouse-ear cress).